The following is a 594-amino-acid chain: MASSTPSSSATSSNAGADPNTTNLRPTTYDTWCGVAHGCTRKLGLKICGFLQRTNSLEEKSRLVSAFKERQSSKNLLSCENSDRDARFRRTETDFSNLFARDLLPAKNGEEQTVQFLLEVVDILLNYVRKTFDRSTKVLDFHHPHQLLEGMEGFNLELSDHPESLEQILVDCRDTLKYGVRTGHPRFFNQLSTGLDIIGLAGEWLTSTANTNMFTYEIAPVFVLMEQITLKKMREIVGWSSKDGDGIFSPGGAISNMYSIMAARYKYFPEVKTKGMAAVPKLVLFTSEHSHYSIKKAGAALGFGTDNVILIKCNERGKIIPADFEAKILEAKQKGYVPFYVNATAGTTVYGAFDPIQEIADICEKYNLWLHVDAAWGGGLLMSRKHRHKLNGIERANSVTWNPHKMMGVLLQCSAILVKEKGILQGCNQMCAGYLFQPDKQYDVSYDTGDKAIQCGRHVDIFKFWLMWKAKGTVGFENQINKCLELAEYLYAKIKNREEFEMVFNGEPEHTNVCFWYIPQSLRGVPDSPQRREKLHKVAPKIKALMMESGTTMVGYQPQGDKANFFRMVISNPAATQSDIDFLIEEIERLGQDL.

Over residues 1 to 13 (MASSTPSSSATSS) the composition is skewed to low complexity. The interval 1 to 23 (MASSTPSSSATSSNAGADPNTTN) is disordered. Position 78 is a phosphoserine (Ser-78). 190 to 192 (QLS) contributes to the 4-aminobutanoate binding site. Residue Lys-405 is modified to N6-(pyridoxal phosphate)lysine. Arg-567 contributes to the 4-aminobutanoate binding site.

The protein belongs to the group II decarboxylase family. Homodimer. It depends on pyridoxal 5'-phosphate as a cofactor.

The catalysed reaction is L-glutamate + H(+) = 4-aminobutanoate + CO2. Functionally, catalyzes the synthesis of the inhibitory neurotransmitter gamma-aminobutyric acid (GABA) with pyridoxal 5'-phosphate as cofactor. This chain is Glutamate decarboxylase 1 (GAD1), found in Pongo abelii (Sumatran orangutan).